Reading from the N-terminus, the 206-residue chain is Enterobactin synthase component D (206 aa).

Residues aspartate 107, glutamate 109, and glutamate 152 each contribute to the Mg(2+) site.

The protein belongs to the P-Pant transferase superfamily. EntD family. As to quaternary structure, entB, EntD, EntE, and EntF form a multienzyme complex called enterobactin synthase. Requires Mg(2+) as cofactor.

The protein localises to the membrane. It carries out the reaction apo-[aryl-carrier protein] + CoA = holo-[aryl-carrier protein] + adenosine 3',5'-bisphosphate + H(+). The enzyme catalyses apo-[peptidyl-carrier protein] + CoA = holo-[peptidyl-carrier protein] + adenosine 3',5'-bisphosphate + H(+). It functions in the pathway siderophore biosynthesis; enterobactin biosynthesis. Involved in the biosynthesis of the siderophore enterobactin (enterochelin), which is a macrocyclic trimeric lactone of N-(2,3-dihydroxybenzoyl)-serine. The serine trilactone serves as a scaffolding for the three catechol functionalities that provide hexadentate coordination for the tightly ligated iron(2+) atoms. Plays an essential role in the assembly of the enterobactin by catalyzing the transfer of the 4'-phosphopantetheine (Ppant) moiety from coenzyme A to the apo-domains of both EntB (ArCP domain) and EntF (PCP domain) to yield their holo-forms which make them competent for the activation of 2,3-dihydroxybenzoate (DHB) and L-serine, respectively. This chain is Enterobactin synthase component D, found in Escherichia coli O157:H7.